The primary structure comprises 501 residues: Glycerol kinase (501 aa).

An ADP-binding site is contributed by Thr-17. Residues Thr-17, Thr-18, and Ser-19 each coordinate ATP. Residue Thr-17 participates in sn-glycerol 3-phosphate binding. Arg-21 is a binding site for ADP. Sn-glycerol 3-phosphate contacts are provided by Arg-87, Glu-88, Tyr-139, and Asp-243. Glycerol is bound by residues Arg-87, Glu-88, Tyr-139, Asp-243, and Gln-244. Residues Thr-265 and Gly-308 each contribute to the ADP site. ATP is bound by residues Thr-265, Gly-308, Gln-312, and Gly-409. ADP is bound by residues Gly-409 and Asn-413.

The protein belongs to the FGGY kinase family.

The catalysed reaction is glycerol + ATP = sn-glycerol 3-phosphate + ADP + H(+). It functions in the pathway polyol metabolism; glycerol degradation via glycerol kinase pathway; sn-glycerol 3-phosphate from glycerol: step 1/1. With respect to regulation, inhibited by fructose 1,6-bisphosphate (FBP). Functionally, key enzyme in the regulation of glycerol uptake and metabolism. Catalyzes the phosphorylation of glycerol to yield sn-glycerol 3-phosphate. The chain is Glycerol kinase from Pseudomonas fluorescens (strain SBW25).